The primary structure comprises 565 residues: NAD-dependent malic enzyme (565 aa).

Tyr104 acts as the Proton donor in catalysis. Arg157 is a binding site for NAD(+). The Proton acceptor role is filled by Lys175. The a divalent metal cation site is built by Glu246, Asp247, and Asp270. Residues Asp270 and Asn418 each coordinate NAD(+).

Belongs to the malic enzymes family. In terms of assembly, homotetramer. Mg(2+) is required as a cofactor. The cofactor is Mn(2+).

The enzyme catalyses (S)-malate + NAD(+) = pyruvate + CO2 + NADH. It catalyses the reaction oxaloacetate + H(+) = pyruvate + CO2. The chain is NAD-dependent malic enzyme from Escherichia coli O157:H7.